Reading from the N-terminus, the 728-residue chain is 1,4-alpha-glucan branching enzyme GlgB (728 aa).

Asp405 serves as the catalytic Nucleophile. The active-site Proton donor is the Glu458.

The protein belongs to the glycosyl hydrolase 13 family. GlgB subfamily. Monomer.

It catalyses the reaction Transfers a segment of a (1-&gt;4)-alpha-D-glucan chain to a primary hydroxy group in a similar glucan chain.. The protein operates within glycan biosynthesis; glycogen biosynthesis. Functionally, catalyzes the formation of the alpha-1,6-glucosidic linkages in glycogen by scission of a 1,4-alpha-linked oligosaccharide from growing alpha-1,4-glucan chains and the subsequent attachment of the oligosaccharide to the alpha-1,6 position. This Klebsiella pneumoniae subsp. pneumoniae (strain ATCC 700721 / MGH 78578) protein is 1,4-alpha-glucan branching enzyme GlgB.